Here is a 227-residue protein sequence, read N- to C-terminus: Cytidylate kinase (227 aa).

7–15 (GPAGSGKST) is a binding site for ATP.

It belongs to the cytidylate kinase family. Type 1 subfamily.

The protein localises to the cytoplasm. It carries out the reaction CMP + ATP = CDP + ADP. It catalyses the reaction dCMP + ATP = dCDP + ADP. In Salinibacter ruber (strain DSM 13855 / M31), this protein is Cytidylate kinase.